The chain runs to 30 residues: XTLSEPEPTCSIEYFRYQAIEDCEYSISVK.

Ca(2+) is required as a cofactor.

Its subcellular location is the secreted. With respect to regulation, fibrino(geno)lytic activity inhibited by EDTA but not by PMSF, E-64, 6-AHA and aprotinin. Functionally, cleaves fibrinogen Aalpha (FGA), gamma (FGG) and Bbeta (FGB) chains. Degrades cross-linked fibrin. Has no amidolytic, plasminogenolytic or caseinolytic activity. Inhibits platelet aggregation induced by collagen (IC(50)=7.5ug/ml) and various other agonists, presumably via activation of a nitridergic pathway. Inhibition is accompanied by reduced ATP release from and surface expression of SELP and CD63 on platelets as well as increased intracellular levels of Ca(2+), cGMP and nitric oxide synthase activity. This is Hementerin from Haementeria depressa (Leech).